Consider the following 206-residue polypeptide: MGSRPRGALSLLLLLLALLSRPASGCPAPCSCAGTLVDCGRRGLTWASLPAAFPPDTTELVLTGNNLTALPPGLLDALPALRAAHLGANPWRCDCRLLPLRAWLAGRPERAPYRDLRCVAPPALRGRLLPYVAEDELRAACAPGLLCWGALVAQLALLVLGLLHALLLALLLGRLRRLRARARARSIQEFSLTAPLVAESARGGAS.

The first 26 residues, 1 to 26 (MGSRPRGALSLLLLLLALLSRPASGC), serve as a signal peptide directing secretion. Cystine bridges form between Cys-26/Cys-32 and Cys-30/Cys-39. The region spanning 27-55 (PAPCSCAGTLVDCGRRGLTWASLPAAFPP) is the LRRNT domain. At 27–147 (PAPCSCAGTL…RAACAPGLLC (121 aa)) the chain is on the extracellular side. An LRR repeat occupies 60–83 (LVLTGNNLTALPPGLLDALPALRA). A glycan (N-linked (GlcNAc...) asparagine) is linked at Asn-66. One can recognise an LRRCT domain in the interval 89–143 (NPWRCDCRLLPLRAWLAGRPERAPYRDLRCVAPPALRGRLLPYVAEDELRAACAP). 2 cysteine pairs are disulfide-bonded: Cys-93-Cys-118 and Cys-95-Cys-141. The chain crosses the membrane as a helical span at residues 148 to 172 (WGALVAQLALLVLGLLHALLLALLL). Residues 173–206 (GRLRRLRARARARSIQEFSLTAPLVAESARGGAS) are Cytoplasmic-facing. 2 positions are modified to phosphoserine: Ser-186 and Ser-191. Phosphothreonine is present on Thr-193. Position 200 is a phosphoserine (Ser-200).

As to quaternary structure, two GP-Ib beta are disulfide-linked to one GP-Ib alpha. GP-IX is complexed with the GP-Ib heterodimer via a non covalent linkage. Interacts with TRAF4.

It is found in the membrane. Gp-Ib, a surface membrane protein of platelets, participates in the formation of platelet plugs by binding to von Willebrand factor, which is already bound to the subendothelium. The polypeptide is Platelet glycoprotein Ib beta chain (Gp1bb) (Mus musculus (Mouse)).